The chain runs to 276 residues: Bis(5'-nucleosyl)-tetraphosphatase, symmetrical (276 aa).

This sequence belongs to the Ap4A hydrolase family.

It catalyses the reaction P(1),P(4)-bis(5'-adenosyl) tetraphosphate + H2O = 2 ADP + 2 H(+). Hydrolyzes diadenosine 5',5'''-P1,P4-tetraphosphate to yield ADP. This is Bis(5'-nucleosyl)-tetraphosphatase, symmetrical from Legionella pneumophila (strain Lens).